Reading from the N-terminus, the 116-residue chain is Aspartate 1-decarboxylase (116 aa).

Ser-25 functions as the Schiff-base intermediate with substrate; via pyruvic acid in the catalytic mechanism. Ser-25 is modified (pyruvic acid (Ser)). Thr-57 is a substrate binding site. The Proton donor role is filled by Tyr-58. Position 73–75 (73–75) interacts with substrate; sequence GAA.

It belongs to the PanD family. In terms of assembly, heterooctamer of four alpha and four beta subunits. It depends on pyruvate as a cofactor. In terms of processing, is synthesized initially as an inactive proenzyme, which is activated by self-cleavage at a specific serine bond to produce a beta-subunit with a hydroxyl group at its C-terminus and an alpha-subunit with a pyruvoyl group at its N-terminus.

Its subcellular location is the cytoplasm. It catalyses the reaction L-aspartate + H(+) = beta-alanine + CO2. It functions in the pathway cofactor biosynthesis; (R)-pantothenate biosynthesis; beta-alanine from L-aspartate: step 1/1. Functionally, catalyzes the pyruvoyl-dependent decarboxylation of aspartate to produce beta-alanine. The polypeptide is Aspartate 1-decarboxylase (Leptospira interrogans serogroup Icterohaemorrhagiae serovar copenhageni (strain Fiocruz L1-130)).